Consider the following 266-residue polypeptide: MLHVSMVGCGAIGRGVLELLKSDPDVVFDVVIVPEHTMDEARGAVSALAPRARVATHLDDQRPDLLVECAGHHALEEHIVPALERGIPCMVVSVGALSEPGMAERLEAAARRGGTQVQLLSGAIGAIDALAAARVGGLDEVIYTGRKPARAWTGTPAEQLFDLEALTEATVIFEGTARDAARLYPKNANVAATVSLAGLGLDRTAVKLLADPHAVENVHHVEARGAFGGFELTMRGKPLAANPKTSALTVFSVVRALGNRAHAVSI.

NAD(+) is bound by residues alanine 123 and asparagine 189. Residue histidine 219 is part of the active site.

The protein belongs to the L-aspartate dehydrogenase family.

The catalysed reaction is L-aspartate + NADP(+) + H2O = oxaloacetate + NH4(+) + NADPH + H(+). It carries out the reaction L-aspartate + NAD(+) + H2O = oxaloacetate + NH4(+) + NADH + H(+). It participates in cofactor biosynthesis; NAD(+) biosynthesis; iminoaspartate from L-aspartate (dehydrogenase route): step 1/1. Its function is as follows. Specifically catalyzes the NAD or NADP-dependent dehydrogenation of L-aspartate to iminoaspartate. The sequence is that of L-aspartate dehydrogenase from Cupriavidus taiwanensis (strain DSM 17343 / BCRC 17206 / CCUG 44338 / CIP 107171 / LMG 19424 / R1) (Ralstonia taiwanensis (strain LMG 19424)).